Consider the following 189-residue polypeptide: Cancer/testis antigen family 45 member A1 (189 aa).

Basic and acidic residues predominate over residues 1–23 (MTDKTEKVAVDPETVFKRPRECD). Disordered regions lie at residues 1-27 (MTDK…SPSY) and 83-118 (RMMQ…SPKS).

It belongs to the CT45 family. In terms of tissue distribution, testis specific. Expressed in cancer cell lines.

It is found in the nucleus. The chain is Cancer/testis antigen family 45 member A1 from Homo sapiens (Human).